A 422-amino-acid polypeptide reads, in one-letter code: 5-hydroxytryptamine receptor 1A (422 aa).

The Extracellular portion of the chain corresponds to 1 to 38; that stretch reads MDVLGPGQGNNTTSSEGPFGTRANATGISDVTFSYQVI. Asn10, Asn11, and Asn24 each carry an N-linked (GlcNAc...) asparagine glycan. A helical transmembrane segment spans residues 39-59; that stretch reads TSLLLGTLIFCAVLGNACVVA. The Cytoplasmic portion of the chain corresponds to 60–73; the sequence is AIALERSLQNVANY. A helical membrane pass occupies residues 74 to 98; that stretch reads LIGSLAVTDLMVSVLVLPMAALYQV. Topologically, residues 99–107 are extracellular; that stretch reads LNKWTLGQV. The chain crosses the membrane as a helical span at residues 108–132; sequence TCDLFIALDVLCCTSSILHLCAIAL. A disulfide bridge connects residues Cys109 and Cys187. Asp116 and Cys120 together coordinate serotonin. The DRY motif; important for ligand-induced conformation changes motif lies at 133–135; sequence DRY. Over 133-152 the chain is Cytoplasmic; the sequence is DRYWAITDPIDYVNKRTPRR. Residues 153 to 174 traverse the membrane as a helical segment; sequence AAALISLTWLVGFLISIPPMLG. The Extracellular portion of the chain corresponds to 175–193; the sequence is WRTPEDRSDPDACTISKDH. A helical membrane pass occupies residues 194-216; it reads GYTIYSTFGAFYIPLLLMLVLYG. Over 217-346 the chain is Cytoplasmic; it reads RIFRAARFRI…LARERKTVKT (130 aa). The interval 237–262 is disordered; it reads GADSRLGASPAPQRKKSANGELGSRE. The 1D-myo-inositol 4-phosphate site is built by Lys345, Thr346, and Gly352. Residues 347 to 370 form a helical membrane-spanning segment; that stretch reads LGIIMGTFILCWLPFFIVALVLPF. Topologically, residues 371-378 are extracellular; the sequence is CESSCHMP. A helical transmembrane segment spans residues 379-403; sequence TLLGAIINWLGYSNSLLNPVIYAYF. Positions 396-400 match the NPxxY motif; important for ligand-induced conformation changes and signaling motif; sequence NPVIY. 1D-myo-inositol 4-phosphate-binding residues include Phe403, Asn404, and Lys405. Residues 404-422 lie on the Cytoplasmic side of the membrane; that stretch reads NKDFQNAFKKILKCKFCRR.

It belongs to the G-protein coupled receptor 1 family. 5-hydroxytryptamine receptor subfamily. HTR1A sub-subfamily. In terms of assembly, heterodimer; heterodimerizes with GPER1. Interacts with YIF1B. Interacts with GPR39 and GALR1.

The protein localises to the cell membrane. The protein resides in the cell projection. It localises to the dendrite. Its activity is regulated as follows. G-protein coupled receptor activity is regulated by lipids: phosphatidylinositol 4-phosphate increases HTR1A-mediated activity. Functionally, G-protein coupled receptor for 5-hydroxytryptamine (serotonin). Also functions as a receptor for various drugs and psychoactive substances. Ligand binding causes a conformation change that triggers signaling via guanine nucleotide-binding proteins (G proteins) and modulates the activity of downstream effectors, such as adenylate cyclase. HTR1A is coupled to G(i)/G(o) G alpha proteins and mediates inhibitory neurotransmission: signaling inhibits adenylate cyclase activity and activates a phosphatidylinositol-calcium second messenger system that regulates the release of Ca(2+) ions from intracellular stores. Beta-arrestin family members regulate signaling by mediating both receptor desensitization and resensitization processes. The chain is 5-hydroxytryptamine receptor 1A (HTR1A) from Equus caballus (Horse).